The chain runs to 273 residues: MSQLSTIIEQAFENRANFTAADCPADIRQAVEEALSGLDNGTLRVAEKIDGEWIVHQWLKKAVLLSFKLNDNKPIESGDLAFYDKVDTKFAGWTEEQFKEAGVRVVPPAVARRGSYQAKNVVLMPSYVNIGAYVDENTMVDTWATVGSCAQIGKNVHLSGGVGIGGVLEPLQANPTIIEDNCFIGARSEIVEGVIVEEGAVISMGVYIGQSTRIYDRETGEIHYGRVPAGSVVVPGSLPSKDGKYSLYAAIIVKKVDAQTRAKTSLNDLLRAD.

Substrate is bound by residues Arg-104 and Asp-141.

It belongs to the transferase hexapeptide repeat family. Homotrimer.

The protein resides in the cytoplasm. It carries out the reaction (S)-2,3,4,5-tetrahydrodipicolinate + succinyl-CoA + H2O = (S)-2-succinylamino-6-oxoheptanedioate + CoA. The protein operates within amino-acid biosynthesis; L-lysine biosynthesis via DAP pathway; LL-2,6-diaminopimelate from (S)-tetrahydrodipicolinate (succinylase route): step 1/3. In Acinetobacter baylyi (strain ATCC 33305 / BD413 / ADP1), this protein is 2,3,4,5-tetrahydropyridine-2,6-dicarboxylate N-succinyltransferase.